The chain runs to 155 residues: Transcriptional repressor NrdR (155 aa).

A zinc finger spans residues 3–34; it reads CPFCSHFESKVVDSRPTDEGQAIRRRRECVSC. The 91-residue stretch at 49–139 folds into the ATP-cone domain; it reads LIVVKKSGNR…VYREFKDINT (91 aa).

Belongs to the NrdR family. It depends on Zn(2+) as a cofactor.

In terms of biological role, negatively regulates transcription of bacterial ribonucleotide reductase nrd genes and operons by binding to NrdR-boxes. The polypeptide is Transcriptional repressor NrdR (Alkaliphilus metalliredigens (strain QYMF)).